Here is a 59-residue protein sequence, read N- to C-terminus: Conotoxin reg3.15 (59 aa).

An N-terminal signal peptide occupies residues 1–15 (RVLLTICLLLFPLTA). A propeptide spanning residues 16 to 44 (IPLGGDQPAERMRNVRSAVQDPRFDSVGW) is cleaved from the precursor. Intrachain disulfides connect cysteine 45/cysteine 59, cysteine 46/cysteine 55, and cysteine 51/cysteine 58.

This sequence belongs to the conotoxin M superfamily. Expressed by the venom duct.

It localises to the secreted. This is Conotoxin reg3.15 from Conus regius (Crown cone).